An 89-amino-acid polypeptide reads, in one-letter code: Large ribosomal subunit protein eL34 (89 aa).

Residues Met1–Lys29 form a disordered region. The segment covering Arg13–Lys29 has biased composition (basic residues).

It belongs to the eukaryotic ribosomal protein eL34 family.

The polypeptide is Large ribosomal subunit protein eL34 (Methanosphaera stadtmanae (strain ATCC 43021 / DSM 3091 / JCM 11832 / MCB-3)).